The chain runs to 1192 residues: MAFLTALFLFLFFSFSSSAIVDLSSETTSLISFKRSLENPSLLSSWNVSSSASHCDWVGVTCLLGRVNSLSLPSLSLRGQIPKEISSLKNLRELCLAGNQFSGKIPPEIWNLKHLQTLDLSGNSLTGLLPRLLSELPQLLYLDLSDNHFSGSLPPSFFISLPALSSLDVSNNSLSGEIPPEIGKLSNLSNLYMGLNSFSGQIPSEIGNISLLKNFAAPSCFFNGPLPKEISKLKHLAKLDLSYNPLKCSIPKSFGELHNLSILNLVSAELIGLIPPELGNCKSLKSLMLSFNSLSGPLPLELSEIPLLTFSAERNQLSGSLPSWMGKWKVLDSLLLANNRFSGEIPHEIEDCPMLKHLSLASNLLSGSIPRELCGSGSLEAIDLSGNLLSGTIEEVFDGCSSLGELLLTNNQINGSIPEDLWKLPLMALDLDSNNFTGEIPKSLWKSTNLMEFTASYNRLEGYLPAEIGNAASLKRLVLSDNQLTGEIPREIGKLTSLSVLNLNANMFQGKIPVELGDCTSLTTLDLGSNNLQGQIPDKITALAQLQCLVLSYNNLSGSIPSKPSAYFHQIEMPDLSFLQHHGIFDLSYNRLSGPIPEELGECLVLVEISLSNNHLSGEIPASLSRLTNLTILDLSGNALTGSIPKEMGNSLKLQGLNLANNQLNGHIPESFGLLGSLVKLNLTKNKLDGPVPASLGNLKELTHMDLSFNNLSGELSSELSTMEKLVGLYIEQNKFTGEIPSELGNLTQLEYLDVSENLLSGEIPTKICGLPNLEFLNLAKNNLRGEVPSDGVCQDPSKALLSGNKELCGRVVGSDCKIEGTKLRSAWGIAGLMLGFTIIVFVFVFSLRRWAMTKRVKQRDDPERMEESRLKGFVDQNLYFLSGSRSREPLSINIAMFEQPLLKVRLGDIVEATDHFSKKNIIGDGGFGTVYKACLPGEKTVAVKKLSEAKTQGNREFMAEMETLGKVKHPNLVSLLGYCSFSEEKLLVYEYMVNGSLDHWLRNQTGMLEVLDWSKRLKIAVGAARGLAFLHHGFIPHIIHRDIKASNILLDGDFEPKVADFGLARLISACESHVSTVIAGTFGYIPPEYGQSARATTKGDVYSFGVILLELVTGKEPTGPDFKESEGGNLVGWAIQKINQGKAVDVIDPLLVSVALKNSQLRLLQIAMLCLAETPAKRPNMLDVLKALKEI.

A signal peptide spans 1–18; the sequence is MAFLTALFLFLFFSFSSS. N47 carries an N-linked (GlcNAc...) asparagine glycan. LRR repeat units lie at residues 64-87, 90-112, 114-137, 138-160, 163-185, 187-209, 235-257, 259-281, 283-304, 330-352, 354-376, 378-400, 402-425, 426-447, 449-471, 473-496, 497-520, 521-543, 545-567, 581-603, 605-628, 629-651, 653-675, 677-697, 701-723, 725-748, 749-772, and 773-795; these read LGRV…EISS, NLRE…IWNL, HLQT…SELP, QLLY…FFIS, ALSS…IGKL, NLSN…IGNI, HLAK…FGEL, NLSI…LGNC, SLKS…ELSE, VLDS…IEDC, MLKH…LCGS, SLEA…FDGC, SLGE…WKLP, LMAL…LWKS, NLME…IGNA, SLKR…GKLT, SLSV…GDCT, SLTT…ITAL, QLQC…PSAY, HHGI…LGEC, VLVE…SRLT, NLTI…MGNS, KLQG…FGLL, SLVK…ASLG, ELTH…LSTM, KLVG…GNLT, QLEY…CGLP, and NLEF…GVCQ. Residues N171, N187, and N208 are each glycosylated (N-linked (GlcNAc...) asparagine). N259 carries N-linked (GlcNAc...) asparagine glycosylation. N-linked (GlcNAc...) asparagine glycosylation is found at N414 and N435. N555 carries an N-linked (GlcNAc...) asparagine glycan. N629 carries N-linked (GlcNAc...) asparagine glycosylation. N-linked (GlcNAc...) asparagine glycosylation is found at N682, N711, and N746. A helical membrane pass occupies residues 828–848; the sequence is WGIAGLMLGFTIIVFVFVFSL. A Phosphothreonine modification is found at T914. The Protein kinase domain occupies 917–1192; that stretch reads FSKKNIIGDG…LDVLKALKEI (276 aa). Residues 923–931 and K945 each bind ATP; that span reads IGDGGFGTV. Y990 carries the phosphotyrosine modification. D1043 acts as the Proton acceptor in catalysis. Y1085 is subject to Phosphotyrosine.

It belongs to the protein kinase superfamily. Ser/Thr protein kinase family. Interacts with TPD1. Post-translationally, autophosphorylates in vitro. As to expression, present in young buds, open flowers and siliques but absent from mature leaves and roots. Strongly expressed in the young organ primordia, and as the anthers and ovules developed, became focused in the microsporangia and in the distal and chalazal regions of the ovule. In cv. Landsberg erecta, only expressed in the anthers of young floral buds.

The protein localises to the cell membrane. The enzyme catalyses L-seryl-[protein] + ATP = O-phospho-L-seryl-[protein] + ADP + H(+). It catalyses the reaction L-threonyl-[protein] + ATP = O-phospho-L-threonyl-[protein] + ADP + H(+). Receptor with a serine/threonine-protein kinase activity required for the specification of the correct number of male archesporial initials and for the subsequent specification of tapetal and middle cell layer identities. In seeds, required for enhancing cell size and the rate of embryonic development. The polypeptide is Leucine-rich repeat receptor protein kinase EMS1 (Arabidopsis thaliana (Mouse-ear cress)).